A 629-amino-acid chain; its full sequence is Probable alpha-L-arabinofuranosidase A (629 aa).

The signal sequence occupies residues 1–25 (MVALSTLSGLSALPFLFSLVQNVYG). N-linked (GlcNAc...) asparagine glycosylation is found at Asn36, Asn51, Asn140, Asn152, Asn168, Asn171, Asn260, Asn494, and Asn534.

This sequence belongs to the glycosyl hydrolase 51 family.

It localises to the secreted. The catalysed reaction is Hydrolysis of terminal non-reducing alpha-L-arabinofuranoside residues in alpha-L-arabinosides.. It functions in the pathway glycan metabolism; L-arabinan degradation. Its function is as follows. Alpha-L-arabinofuranosidase involved in the degradation of arabinoxylan, a major component of plant hemicellulose. Acts only on small linear 1,5-alpha-linked L-arabinofuranosyl oligosaccharides. This is Probable alpha-L-arabinofuranosidase A (abfA) from Aspergillus flavus (strain ATCC 200026 / FGSC A1120 / IAM 13836 / NRRL 3357 / JCM 12722 / SRRC 167).